We begin with the raw amino-acid sequence, 275 residues long: Formamidopyrimidine-DNA glycosylase (275 aa).

P2 (schiff-base intermediate with DNA) is an active-site residue. The Proton donor role is filled by E3. The active-site Proton donor; for beta-elimination activity is K59. 2 residues coordinate DNA: H94 and R113. The segment at L241–N275 adopts an FPG-type zinc-finger fold. R265 functions as the Proton donor; for delta-elimination activity in the catalytic mechanism.

The protein belongs to the FPG family. In terms of assembly, monomer. Zn(2+) is required as a cofactor.

The enzyme catalyses Hydrolysis of DNA containing ring-opened 7-methylguanine residues, releasing 2,6-diamino-4-hydroxy-5-(N-methyl)formamidopyrimidine.. It catalyses the reaction 2'-deoxyribonucleotide-(2'-deoxyribose 5'-phosphate)-2'-deoxyribonucleotide-DNA = a 3'-end 2'-deoxyribonucleotide-(2,3-dehydro-2,3-deoxyribose 5'-phosphate)-DNA + a 5'-end 5'-phospho-2'-deoxyribonucleoside-DNA + H(+). In terms of biological role, involved in base excision repair of DNA damaged by oxidation or by mutagenic agents. Acts as a DNA glycosylase that recognizes and removes damaged bases. Has a preference for oxidized purines, such as 7,8-dihydro-8-oxoguanine (8-oxoG). Has AP (apurinic/apyrimidinic) lyase activity and introduces nicks in the DNA strand. Cleaves the DNA backbone by beta-delta elimination to generate a single-strand break at the site of the removed base with both 3'- and 5'-phosphates. The sequence is that of Formamidopyrimidine-DNA glycosylase from Ureaplasma parvum serovar 3 (strain ATCC 700970).